We begin with the raw amino-acid sequence, 201 residues long: FMN-dependent NADH:quinone oxidoreductase (201 aa).

FMN contacts are provided by residues S10, 16–18 (SQS), and 96–99 (MYNF).

It belongs to the azoreductase type 1 family. In terms of assembly, homodimer. FMN is required as a cofactor.

It catalyses the reaction 2 a quinone + NADH + H(+) = 2 a 1,4-benzosemiquinone + NAD(+). It carries out the reaction N,N-dimethyl-1,4-phenylenediamine + anthranilate + 2 NAD(+) = 2-(4-dimethylaminophenyl)diazenylbenzoate + 2 NADH + 2 H(+). Quinone reductase that provides resistance to thiol-specific stress caused by electrophilic quinones. Functionally, also exhibits azoreductase activity. Catalyzes the reductive cleavage of the azo bond in aromatic azo compounds to the corresponding amines. In Sodalis glossinidius (strain morsitans), this protein is FMN-dependent NADH:quinone oxidoreductase.